Reading from the N-terminus, the 291-residue chain is MSALQRTPQPASLAERLADLAVDALIDEADLSPKPALVDRCSNGAHTDLHLGLMHSSALSLWPTFKLMADAAAQFQAVGEPLREALGRLGREGEATMLRTTSGVNTHRGAIWALGLLVTAAALDPQDCGPDAVCQRAASLALIKDRQVLAQNSHGSEVVRRYGVMGAREQAQHGFPAVIRCALPQLQRSRAAGSGEQNARLDALLAIMTTLADTCVLHRAGLEGLQTMQNGAQRVLDAGGSASLAGRRALNQLDQQLLALNASPGGAADLLAACLFIDGLEPALGPVSRSA.

It belongs to the CitG/MdcB family.

It catalyses the reaction 3'-dephospho-CoA + ATP = 2'-(5''-triphospho-alpha-D-ribosyl)-3'-dephospho-CoA + adenine. Involved in the formation of 2-(5''-phosphoribosyl)-3'-dephosphocoenzyme-A, the prosthetic group of the acyl-carrier protein of the malonate decarboxylase. The chain is Probable 2-(5''-triphosphoribosyl)-3'-dephosphocoenzyme-A synthase from Pseudomonas syringae pv. tomato (strain ATCC BAA-871 / DC3000).